We begin with the raw amino-acid sequence, 286 residues long: Homoserine kinase (286 aa).

Position 78–88 (78–88 (PLARGLGSSSS)) interacts with ATP.

Belongs to the GHMP kinase family. Homoserine kinase subfamily.

The protein resides in the cytoplasm. The enzyme catalyses L-homoserine + ATP = O-phospho-L-homoserine + ADP + H(+). Its pathway is amino-acid biosynthesis; L-threonine biosynthesis; L-threonine from L-aspartate: step 4/5. In terms of biological role, catalyzes the ATP-dependent phosphorylation of L-homoserine to L-homoserine phosphate. The polypeptide is Homoserine kinase (Streptococcus equi subsp. zooepidemicus (strain H70)).